The following is a 1292-amino-acid chain: MSSECDGGSKAVMNGLAPGSNGQDKATADPLRARSISAVKIIPVKTVKNASGLVLPTDMDLTKICTGKGAVTLRASSSYRETPSSSPASPQETRQHESKPGLEPEPSSADEWRLSSSADANGNAQPSSLAAKGYRSVHPNLPSDKSQDATSSSAAQPEVIVVPLYLVNTDRGQEGTARPPTPLGPLGCVPTIPATASAASPLTFPTLDDFIPPHLQRWPHHSQPARASGSFAPISQTPPSFSPPPPLVPPAPEDLRRVSEPDLTGAVSSTDSSPLLNEVSSSLIGTDSQAFPSVSKPSSAYPSTTIVNPTIVLLQHNREQQKRLSSLSDPVSERRVGEQDSAPTQEKPTSPGKAIEKRAKDDSRRVVKSTQDLSDVSMDEVGIPLRNTERSKDWYKTMFKQIHKLNRDTPEENPYFPTYKFPELPEIQQTSEEDNPYTPTYQFPASTPSPKSEDDDSDLYSPRYSFSEDTKSPLSVPRSKSEMSYIDGEKVVKRSATLPLPARSSSLKSSSERNDWEPPDKKVDTRKYRAEPKSIYEYQPGKSSVLTNEKMSRDISPEEIDLKNEPWYKFFSELEFGKPPPKKIWDYTPGDCSILPREDRKTNLDKDLSLCQTELEADLEKMETLNKAPSANVPQSSAISPTPEISSETPGYIYSSNFHAVKRESDGAPGDLTSLENERQIYKSVLEGGDIPLQGLSGLKRPSSSASTKDSESPRHFIPADYLESTEEFIRRRHDDKEKLLADQRRLKREQEEADIAARRHTGVIPTHHQFITNERFGDLLNIDDTAKRKSGSEMRPARAKFDFKAQTLKELPLQKGDIVYIYKQIDQNWYEGEHHGRVGIFPRTYIELLPPAEKAQPKKLTPVQVLEYGEAIAKFNFNGDTQVEMSFRKGERITLLRQVDENWYEGRIPGTSRQGIFPITYVDVIKRPLVKNPVDYMDLPFSSSPSRSATASPQFSSHSKLITPAPSSLPHSRRALSPEMHAVTSEWISLTVGVPGRRSLALTPPLPPLPEASIYNTDHLALSPRASPSLSLSLPHLSWSDRPTPRSVASPLALPSPHKTYSLAPTSQASLHMNGDGGVHTPSSGIHQDSFLQLPLGSSDSVISQLSDAFSSQSKRQPWREESGQYERKAERGAGERGPGGPKISKKSCLKPSDVVRCLSTEQRLSDLNTPEESRPGKPLGSAFPGSEAEQTERHRGGEQAGRKAARRGGSQQPQAQQRRVTPDRSQTSQDLFSYQALYSYIPQNDDELELRDGDIVDVMEKCDDGWFVGTSRRTKQFGTFPGNYVKPLYL.

4 disordered regions span residues 1–29 (MSSE…ATAD), 73–158 (LRAS…AQPE), 214–275 (HLQR…SSPL), and 318–381 (REQQ…MDEV). Residues 74 to 89 (RASSSYRETPSSSPAS) are compositionally biased toward low complexity. Phosphothreonine is present on T82. Phosphoserine occurs at positions 86 and 89. Over residues 93 to 102 (TRQHESKPGL) the composition is skewed to basic and acidic residues. A phosphoserine mark is found at E105, L114, V137, S146, S242, and S259. Positions 114–128 (LSSSADANGNAQPSS) are enriched in polar residues. Positions 240-252 (SFSPPPPLVPPAP) are enriched in pro residues. Residues 266-275 (AVSSTDSSPL) are compositionally biased toward polar residues. Phosphoserine is present on S341. Position 344 is a phosphothreonine (T344). Residues E346 and S350 each carry the phosphoserine modification. A compositionally biased stretch (basic and acidic residues) spans 354–365 (AIEKRAKDDSRR). A SoHo domain is found at 366 to 469 (VVKSTQDLSD…YSPRYSFSED (104 aa)). A phosphoserine mark is found at S369, S374, and N387. Residues 405–534 (LNRDTPEENP…TRKYRAEPKS (130 aa)) form a disordered region. A compositionally biased stretch (polar residues) spans 437 to 450 (YTPTYQFPASTPSP). A phosphoserine mark is found at S452, S465, D469, S472, R478, and S481. Basic and acidic residues predominate over residues 510 to 534 (SSERNDWEPPDKKVDTRKYRAEPKS). Y536 is modified (phosphotyrosine; by ABL1). 4 positions are modified to phosphoserine: S556, N603, S609, and S640. The segment at 628-650 (APSANVPQSSAISPTPEISSETP) is disordered. The residue at position 654 (Y654) is a Phosphotyrosine; by ABL1. A phosphoserine mark is found at S665 and K700. The segment at 692 to 716 (PLQGLSGLKRPSSSASTKDSESPRH) is disordered. T708 carries the phosphothreonine modification. Residues S713, I730, D735, and I765 each carry the phosphoserine modification. Residues 793–852 (SEMRPARAKFDFKAQTLKELPLQKGDIVYIYKQIDQNWYEGEHHGRVGIFPRTYIELLPP) form the SH3 1 domain. A Phosphothreonine modification is found at T862. The SH3 2 domain occupies 867–928 (LEYGEAIAKF…PITYVDVIKR (62 aa)). Phosphoserine is present on V923. At Y937 the chain carries Phosphotyrosine. Low complexity predominate over residues 944-954 (SSPSRSATASP). 4 disordered regions span residues 944-976 (SSPS…SRRA), 1041-1064 (SDRP…TYSL), 1106-1150 (QLSD…KKSC), and 1162-1230 (TEQR…SQTS). A phosphoserine mark is found at S945 and S953. A compositionally biased stretch (polar residues) spans 955–971 (QFSSHSKLITPAPSSLP). The span at 1106–1117 (QLSDAFSSQSKR) shows a compositional bias: polar residues. The span at 1119 to 1136 (PWREESGQYERKAERGAG) shows a compositional bias: basic and acidic residues. The span at 1162–1172 (TEQRLSDLNTP) shows a compositional bias: polar residues. A compositionally biased stretch (basic and acidic residues) spans 1192–1203 (QTERHRGGEQAG). The segment covering 1211–1230 (GSQQPQAQQRRVTPDRSQTS) has biased composition (polar residues). A Phosphoserine modification is found at Q1213. In terms of domain architecture, SH3 3 spans 1231–1292 (QDLFSYQALY…PGNYVKPLYL (62 aa)). Y1240 is modified (phosphotyrosine; by ABL1).

As to quaternary structure, interacts (via third SH3 domain) with the Ten-1 ICD form of TENM1; the interaction induces the translocation of SORBS1 to the nucleus. Interacts with INSM1. Interacts with the long isoform of AFDN and with VCL. AFDN and VCL bind to SORBS1 in a competitive manner and do not form a ternary complex. Interacts with ABL1, CBL, CBLB and INPPL1/SHIP2 through the third SH3 domain. Interaction with ABL1 occurs only after insulin stimulation while this has no effect on the interaction with INPPL1. Interacts with the insulin receptor but dissociates from it following insulin stimulation. Also interacts with SCA7, PTK2/FAK1 and flotillin. Interacts (via SH3 domain 2) with PXN. Post-translationally, O-glycosylated. Detected in skeletal muscle (at protein level). Widely expressed with highest levels in heart and skeletal muscle.

The protein localises to the cell junction. It is found in the adherens junction. It localises to the cell membrane. Its subcellular location is the cytoplasm. The protein resides in the cytoskeleton. The protein localises to the focal adhesion. It is found in the nucleus. It localises to the nucleus matrix. In terms of biological role, plays a role in tyrosine phosphorylation of CBL by linking CBL to the insulin receptor. Required for insulin-stimulated glucose transport. Involved in formation of actin stress fibers and focal adhesions. The protein is Sorbin and SH3 domain-containing protein 1 of Homo sapiens (Human).